Consider the following 89-residue polypeptide: Co-chaperonin GroES (89 aa).

It belongs to the GroES chaperonin family. In terms of assembly, heptamer of 7 subunits arranged in a ring. Interacts with the chaperonin GroEL.

It is found in the cytoplasm. Together with the chaperonin GroEL, plays an essential role in assisting protein folding. The GroEL-GroES system forms a nano-cage that allows encapsulation of the non-native substrate proteins and provides a physical environment optimized to promote and accelerate protein folding. GroES binds to the apical surface of the GroEL ring, thereby capping the opening of the GroEL channel. In Porphyromonas gingivalis (strain ATCC 33277 / DSM 20709 / CIP 103683 / JCM 12257 / NCTC 11834 / 2561), this protein is Co-chaperonin GroES.